We begin with the raw amino-acid sequence, 227 residues long: 7-cyano-7-deazaguanine synthase (227 aa).

8–18 (VSGGADSATVL) contacts ATP. Positions 192, 202, 205, and 208 each coordinate Zn(2+).

Belongs to the QueC family. Zn(2+) is required as a cofactor.

It carries out the reaction 7-carboxy-7-deazaguanine + NH4(+) + ATP = 7-cyano-7-deazaguanine + ADP + phosphate + H2O + H(+). It functions in the pathway purine metabolism; 7-cyano-7-deazaguanine biosynthesis. Functionally, catalyzes the ATP-dependent conversion of 7-carboxy-7-deazaguanine (CDG) to 7-cyano-7-deazaguanine (preQ(0)). This is 7-cyano-7-deazaguanine synthase from Rickettsia canadensis (strain McKiel).